The primary structure comprises 246 residues: 3-deoxy-manno-octulosonate cytidylyltransferase (246 aa).

It belongs to the KdsB family.

The protein localises to the cytoplasm. The enzyme catalyses 3-deoxy-alpha-D-manno-oct-2-ulosonate + CTP = CMP-3-deoxy-beta-D-manno-octulosonate + diphosphate. The protein operates within nucleotide-sugar biosynthesis; CMP-3-deoxy-D-manno-octulosonate biosynthesis; CMP-3-deoxy-D-manno-octulosonate from 3-deoxy-D-manno-octulosonate and CTP: step 1/1. It functions in the pathway bacterial outer membrane biogenesis; lipopolysaccharide biosynthesis. Its function is as follows. Activates KDO (a required 8-carbon sugar) for incorporation into bacterial lipopolysaccharide in Gram-negative bacteria. The polypeptide is 3-deoxy-manno-octulosonate cytidylyltransferase (Leptospira borgpetersenii serovar Hardjo-bovis (strain JB197)).